We begin with the raw amino-acid sequence, 591 residues long: MPNPVRFVYRVDLRSPEEIFEHGFSTLGDVRNFFEHILSTNFGRSYFISTSETPTAAIRFFGSWLREYVPEHPRRAYLYEIRADQHFYNARATGENLLDLMRQRQVVFDSGDREMAQMGIRALRTSFAYQREWFTDGPIAAANVRSAWLVDAVPVEPGHAHHPAGRVVETTRINEPEMHNPHYQELQTQANDQPWLPTPGIATPVHLSIPQAASVADVSEGTSASLSFACPDWSPPSSNGENPLDKCIAEKIDNYNLQSLPQYASSVKELEDTPVYLRGIKTQKTFMLQADPQNNNVFLVEVNPKQKSSFPQTIFFWDVYQRICLKDLTGAQISLSLTAFTTQYAGQLKVHLSVSAVNAVNQKWKMTPQDIAITQFRVSSELLGQTENGLFWNTKSGGSQHDLYVCPLKNPPSDLEELQIIVDECTTHAQFVTMRAASTFFVDVQLGWYWRGYYYTPQLSGWSYQMKTPDGQIFYDLKTSKIFFVQDNQNVFFLHNKLNKQTGYSWDWVEWLKHDMNEDKDENFKWYFSRDDLTIPSVEGLNFRHIRCYADNQQLKVIISGSRWGGWYSTYDKVESNVEDKILVKDGFDRF.

The tract at residues 1–205 (MPNPVRFVYR…LPTPGIATPV (205 aa)) is mono-ADP ribosyltransferase (mART) domain. Residues 206 to 256 (HLSIPQAASVADVSEGTSASLSFACPDWSPPSSNGENPLDKCIAEKIDNYN) form an NAD(+)-binding pocket region. Cys-230 and Cys-247 form a disulfide bridge. The short motif at 268–272 (KELED) is the KELED motif, involved in host ER trafficking, solvent exposed in the crystal structure element. The D2 domain stretch occupies residues 273–439 (TPVYLRGIKT…QFVTMRAAST (167 aa)). Positions 440-591 (FFVDVQLGWY…ILVKDGFDRF (152 aa)) are D3 domain.

The protein belongs to the bacterial exotoxin subunit A family. Monomer. Binds to host (human) pulmonary surfactant-associated protein A1 (SFTPA1), the major mammalian protein component of pulmonary surfactant. Binds to host (human) surface annexin A2 (ANXA2) on the cell surface; anti-ANXA2 antibodies decrease binding to cells. Interacts with cytosolic host (human) NLRP3, which it ADP-ribosylates in vitro. Post-translationally, 8 hours after treatment of HeLa cells with purified protein, a substantial amount is processed to 2 nearly equal-sized fragments. The disulfide bond between Cys-230 and Cys-247 is required to for the toxin to exert its mART and vacuolating activities within target cells, and for protein processing. Acidic pH in the endosome and retrograde transport are required for toxin cleavage, which is required for both toxin activities. Trypsin treatment under mild conditions leads to cleavage at Lys-305 and Lys-307; the 2 proteins fragments remain associated and can be internalized and vacuolate HeLa cells.

The protein resides in the cell membrane. It is found in the cytoplasm. It localises to the cell surface. The protein localises to the cell projection. Its subcellular location is the attachment organelle. The protein resides in the host cytoplasm. It is found in the host cytosol. It localises to the host endoplasmic reticulum. In vitro ADP-ribosylation is enhanced by dithiotheritol. The main virulence factor for this bacteria, a mono-ADP-ribosylating toxin (mART), that transfers the ADP-ribosyl group from NAD(+) to multiple target proteins in vitro. Also elicits cytopathic effects in mammalian cells, such as disorganization and disruption of respiratory epithelial integrity in tracheal epithelium and vacuolization in the cytoplasm of CHO and HeLa cells as well as in mice and baboons. Treatment of mice or baboons with CARDS elicits a response that is consistent with human M.pneumoniae infections and mouse models of both infection and intoxication, suggesting that CARDS toxin is sufficient to cause prolonged inflammatory responses and airway dysfunction. Treatment of baboons with CARDS induces a number of cytokines; G-CSF (40 fold), IL-1Ra (10 fold), IL-6 and IL-8 (333 and 100 fold, respectively), MIP-1a (5 fold), and RANTES (9 fold). Treatment of mice gives a similar response. Binds phosphatidyl choline, dipalmitoylphosphatidylcholine (DPPC) and sphingomyelin via domains D2 plus D3. In terms of biological role, has at least 2 host receptors SFTPA1 and ANXA2. Internalized by a clathrin-mediated process; protein is rapidly taken up at 37 degrees Celsius. Clathrin-independent or caveolin-dependent endocytosis were not detected. In HeLa cells internalized CARDS trafficks toward the nucleus by retrograde transport from early to late endosomes, then the Golgi apparatus; at 16 hours most toxin is concentrated in the perinuclear region in the host endoplasmic reticulum (ER). Failure to localize to the host ER prevents ADP-ribosylation and vacuolization. An acidic compartment is required to mediate retrotransport and processing of toxin into an N-terminal fragment with mART activity and a C-terminal fragment that is able to induce vacuolization. Functionally, induces the host NLRP3 inflammasome to release interleukin-1 beta (IL-1 beta); IL-1 beta release requires ADP-ribosylation activity and uptake by host macrophages. In the host colocalizes with the NLRP3 inflammasome; ADP-ribosylates NLRP3 in vitro. ADP-ribosylation of NLRP3 may lead to hyperinflammation. The chain is ADP-ribosylating toxin CARDS from Mycoplasma pneumoniae (strain ATCC 29342 / M129 / Subtype 1) (Mycoplasmoides pneumoniae).